The following is a 548-amino-acid chain: uncharacterized protein (548 aa).

Residues Ser19 and Ser25 each carry the phosphoserine modification. Position 47 is a phosphothreonine (Thr47).

This is an uncharacterized protein from Schizosaccharomyces pombe (strain 972 / ATCC 24843) (Fission yeast).